The chain runs to 581 residues: 2-hydroxyacyl-CoA lyase 1 (581 aa).

Phosphoserine is present on residues serine 4 and serine 6. Residue glutamate 63 coordinates thiamine diphosphate. An N6-succinyllysine mark is found at lysine 354, lysine 361, and lysine 368. Positions 404–487 (TMDIGRTMLQ…IILLVVNNNG (84 aa)) are thiamine pyrophosphate binding. Aspartate 458 and asparagine 485 together coordinate Mg(2+). The short motif at 579–581 (SNM) is the Microbody targeting signal element.

This sequence belongs to the TPP enzyme family. In terms of assembly, homotetramer. Mg(2+) serves as cofactor. The cofactor is thiamine diphosphate. As to expression, predominanly expressed in liver.

The protein localises to the peroxisome. It carries out the reaction a 2-hydroxy-3-methyl fatty acyl-CoA = a 2-methyl-branched fatty aldehyde + formyl-CoA. It catalyses the reaction an (R)-2-hydroxy-long-chain-fatty acyl-CoA = a long-chain fatty aldehyde + formyl-CoA. The enzyme catalyses 2-hydroxy-3-methylhexadecanoyl-CoA = 2-methylpentadecanal + formyl-CoA. The catalysed reaction is 2-hydroxyoctadecanoyl-CoA = heptadecanal + formyl-CoA. It carries out the reaction 2-hydroxyphytanoyl-CoA = 2,6,10,14-tetramethylpentadecanal + formyl-CoA. The protein operates within lipid metabolism; fatty acid metabolism. In terms of biological role, peroxisomal 2-OH acyl-CoA lyase involved in the cleavage (C1 removal) reaction in the fatty acid alpha-oxydation in a thiamine pyrophosphate (TPP)-dependent manner. Involved in the degradation of 3-methyl-branched fatty acids like phytanic acid and the shortening of 2-hydroxy long-chain fatty acids. Plays a significant role in the biosynthesis of heptadecanal in the liver. The chain is 2-hydroxyacyl-CoA lyase 1 (Hacl1) from Mus musculus (Mouse).